Reading from the N-terminus, the 220-residue chain is Uracil-DNA glycosylase 1 (220 aa).

The active-site Proton acceptor is the D65.

The protein belongs to the uracil-DNA glycosylase (UDG) superfamily. UNG family.

It localises to the cytoplasm. The enzyme catalyses Hydrolyzes single-stranded DNA or mismatched double-stranded DNA and polynucleotides, releasing free uracil.. Excises uracil residues from the DNA which can arise as a result of misincorporation of dUMP residues by DNA polymerase or due to deamination of cytosine. This Bacteroides fragilis (strain YCH46) protein is Uracil-DNA glycosylase 1.